Here is a 368-residue protein sequence, read N- to C-terminus: Mitogen-activated protein kinase KSS1 (368 aa).

A Protein kinase domain is found at 13 to 313; that stretch reads YKLVDLIGEG…AAEALRHPYL (301 aa). Residues 19-27 and Lys-42 each bind ATP; that span reads IGEGAYGTV. Asp-143 (proton acceptor) is an active-site residue. Residue Thr-183 is modified to Phosphothreonine. The TXY signature appears at 183–185; sequence TEY. A Phosphotyrosine modification is found at Tyr-185.

The protein belongs to the protein kinase superfamily. Ser/Thr protein kinase family. MAP kinase subfamily. HOG1 sub-subfamily. In terms of assembly, in the nucleus, KSS1 forms a complex with DIG1, DIG2 and STE12; in contrast to FUS3 the interaction of KSS1 with STE12 does not depend on DIG1 and DIG2. Phosphorylated KSS1 shows reduced interaction with STE12. During pheromone activation and phosphorylation, KSS1 forms a membrane-associated complex with the scaffold protein STE5, the MAPKK STE7, the MAPKKK STE11, and the G-protein beta subunit GBB/STE4; interacting directly with POF1, STE7 and STE5 proteins. Mg(2+) serves as cofactor. Post-translationally, dually phosphorylated on Thr-183 and Tyr-185 by STE7 in response to pheromone or carbon/nitrogen limitation, which activates the enzyme. Activated FUS3 down-regulates KSS1 phosphorylation.

The protein localises to the nucleus. The protein resides in the cytoplasm. Its subcellular location is the periplasm. It carries out the reaction L-seryl-[protein] + ATP = O-phospho-L-seryl-[protein] + ADP + H(+). It catalyses the reaction L-threonyl-[protein] + ATP = O-phospho-L-threonyl-[protein] + ADP + H(+). Its activity is regulated as follows. Activated by tyrosine and threonine phosphorylation after pheromone treatment or carbon/nitrogen limitation. Its function is as follows. Together with closely related FUS3, KSS1 is the final kinase in the signal transduction cascade regulating activation/repression of the mating and filamentation pathways, induced by pheromone and nitrogen/carbon limitation, respectively. Phosphorylated KSS1 activates both pathways, whereas activated FUS3 activates the mating but suppresses the filamentation pathway. KSS1 activity is down-regulated by FUS3 during pheromone induction to prevent inappropriate activation of the filamentation pathway. During induction of filamentation, KSS1 activates the transcription factor STE12 resulting in its binding to and activation of filamentation specific genes. Non-activated KSS1 has a kinase-independent repressive effect on STE12 transcriptional activity, that is mediated by direct binding to STE12 and depends on the presence of DIG1 and DIG2, and that is required for the suppression of filamentation under normal growth conditions. SSN3/SRB10 contributes further to the suppression of filamentation under these conditions by reducing STE12 stability independent of KSS1. FUS3 can partially compensate for the lack of KSS1 but filamentation becomes constitutively induced at a low level in the absence of any signal. KSS1 phosphorylates STE7, STE5, FAR1, DIG1, DIG2, STE12, and SST2. In Saccharomyces cerevisiae (strain ATCC 204508 / S288c) (Baker's yeast), this protein is Mitogen-activated protein kinase KSS1 (KSS1).